The following is a 144-amino-acid chain: Heme transporter hrg1-B (144 aa).

4 helical membrane passes run isoleucine 6–valine 26, alanine 38–isoleucine 58, phenylalanine 71–isoleucine 91, and phenylalanine 107–tyrosine 127. The short motif at isoleucine 140–leucine 141 is the Di-leucine motif element.

Belongs to the HRG family.

The protein resides in the endosome membrane. It is found in the lysosome membrane. Its subcellular location is the cytoplasmic vesicle. The protein localises to the phagosome membrane. It carries out the reaction heme b(in) = heme b(out). Its function is as follows. Heme transporter that regulates intracellular heme availability through the endosomal or lysosomal compartment. In macrophages, is the heme transporter for heme-iron recycling. Essential for macrophage iron homeostasis, transports heme from the phagolysosome to the cytoplasm during erythrophagocytosis (EP). The chain is Heme transporter hrg1-B (slc48a1a) from Danio rerio (Zebrafish).